A 341-amino-acid chain; its full sequence is GTP-binding protein REM 2 (341 aa).

Residues 1 to 13 are compositionally biased toward acidic residues; it reads MHTDLDTDMDMDT. 2 disordered regions span residues 1-71 and 84-106; these read MHTD…GSMP and VDEL…GSGE. Residues 18–30 are compositionally biased toward polar residues; sequence LCSSSSRQASPLG. The residue at position 27 (Ser-27) is a Phosphoserine. Residues 90–106 are compositionally biased toward low complexity; the sequence is PPQASPSGSSDSLGSGE. Residues 122–129, 230–233, and 261–262 contribute to the GTP site; these read GESGVGKS, NKSD, and AA. The interval 282-309 is disordered; the sequence is RGRGHAGGQRPEPSSPDGPAPPTRRESL. Positions 294–303 are enriched in pro residues; that stretch reads PSSPDGPAPP. Ser-296 carries the phosphoserine modification.

Belongs to the small GTPase superfamily. RGK family.

The protein resides in the cell membrane. Functionally, binds GTP saturably and exhibits a low intrinsic rate of GTP hydrolysis. The protein is GTP-binding protein REM 2 (Rem2) of Mus musculus (Mouse).